A 644-amino-acid chain; its full sequence is DNA mismatch repair protein MutL (644 aa).

The segment at 336-400 (ERPFEPSSPQ…EISRDSSLGE (65 aa)) is disordered. Residues 373–400 (SKTHSTWDEASRVDTSRAEISRDSSLGE) show a composition bias toward basic and acidic residues.

This sequence belongs to the DNA mismatch repair MutL/HexB family.

Functionally, this protein is involved in the repair of mismatches in DNA. It is required for dam-dependent methyl-directed DNA mismatch repair. May act as a 'molecular matchmaker', a protein that promotes the formation of a stable complex between two or more DNA-binding proteins in an ATP-dependent manner without itself being part of a final effector complex. This chain is DNA mismatch repair protein MutL, found in Shewanella sp. (strain MR-7).